Reading from the N-terminus, the 202-residue chain is MEENNNIYPIFDRMLTRQDKEELLKQRGVMIWFTGLSGSGKSTIAIALERELHKRGLLCRILDGDNIRTGINNNLSFSETDRVENIRRIAEVSKLFIDTGIITIAAFISPNNDIREMAARIVGPDDFLEIFVSTPLAECEKRDVKGLYAKARRGEIKNFTGISAPFEAPEHPALSLDTSVLSLEESVNRLLEIVLPRVSRHE.

35–42 (GLSGSGKS) contributes to the ATP binding site. The active-site Phosphoserine intermediate is the S109.

Belongs to the APS kinase family.

The catalysed reaction is adenosine 5'-phosphosulfate + ATP = 3'-phosphoadenylyl sulfate + ADP + H(+). It participates in sulfur metabolism; hydrogen sulfide biosynthesis; sulfite from sulfate: step 2/3. Functionally, catalyzes the synthesis of activated sulfate. This Bacteroides fragilis (strain YCH46) protein is Adenylyl-sulfate kinase.